The chain runs to 412 residues: Tyrosine--tRNA ligase (412 aa).

A 'HIGH' region motif is present at residues 56 to 65; the sequence is PSAPDVHIGH. A 'KMSKS' region motif is present at residues 240 to 244; sequence KMSKS. ATP is bound at residue K243. In terms of domain architecture, S4 RNA-binding spans 351–412; the sequence is VWIVDLLVTL…GKRKFKKLVR (62 aa).

The protein belongs to the class-I aminoacyl-tRNA synthetase family. TyrS type 2 subfamily. Homodimer.

It is found in the cytoplasm. It carries out the reaction tRNA(Tyr) + L-tyrosine + ATP = L-tyrosyl-tRNA(Tyr) + AMP + diphosphate + H(+). Functionally, catalyzes the attachment of tyrosine to tRNA(Tyr) in a two-step reaction: tyrosine is first activated by ATP to form Tyr-AMP and then transferred to the acceptor end of tRNA(Tyr). The chain is Tyrosine--tRNA ligase from Halalkalibacterium halodurans (strain ATCC BAA-125 / DSM 18197 / FERM 7344 / JCM 9153 / C-125) (Bacillus halodurans).